We begin with the raw amino-acid sequence, 95 residues long: Histone-like DNA-binding protein (95 aa).

Belongs to the bacterial histone-like protein family.

In Rickettsia conorii (strain ATCC VR-613 / Malish 7), this protein is Histone-like DNA-binding protein.